Consider the following 406-residue polypeptide: LIM/homeobox protein Lhx1 (406 aa).

LIM zinc-binding domains are found at residues 4-54 (CAGC…CKND) and 63-117 (CAGC…CKED). 2 disordered regions span residues 128-187 (NSLH…RTTI) and 293-374 (YDFF…EVFG). Over residues 137–148 (SDPSLSPDSQDP) the composition is skewed to low complexity. The span at 151 to 167 (DDAKDSESANVSDKEAG) shows a compositional bias: basic and acidic residues. S162 carries the phosphoserine modification. Positions 180–239 (RRGPRTTIKAKQLETLKAAFAATPKPTRHIREQLAQETGLNMRVIQVWFQNRRSKERRMK) form a DNA-binding region, homeobox. The span at 315–327 (PSSGPSGTPLGGL) shows a compositional bias: low complexity. Pro residues predominate over residues 352–362 (GDSPSPEPSLP).

As to quaternary structure, interacts with LDB1 via the tandem LIM domains. As to expression, expressed in the brain, thymus, and tonsils. Expressed in samples from patients with chronic myeloid leukemia (CML) and in 58% of acute myeloid leukemia (AML) cell lines.

The protein resides in the nucleus. Functionally, potential transcription factor. May play a role in early mesoderm formation and later in lateral mesoderm differentiation and neurogenesis. The polypeptide is LIM/homeobox protein Lhx1 (LHX1) (Homo sapiens (Human)).